A 248-amino-acid chain; its full sequence is tRNA pseudouridine synthase A (248 aa).

Catalysis depends on aspartate 53, which acts as the Nucleophile. Tyrosine 111 contacts substrate.

Belongs to the tRNA pseudouridine synthase TruA family. Homodimer.

The enzyme catalyses uridine(38/39/40) in tRNA = pseudouridine(38/39/40) in tRNA. In terms of biological role, formation of pseudouridine at positions 38, 39 and 40 in the anticodon stem and loop of transfer RNAs. This Listeria welshimeri serovar 6b (strain ATCC 35897 / DSM 20650 / CCUG 15529 / CIP 8149 / NCTC 11857 / SLCC 5334 / V8) protein is tRNA pseudouridine synthase A.